Reading from the N-terminus, the 1760-residue chain is Cilia- and flagella-associated protein 44 (1760 aa).

WD repeat units lie at residues 119–160 (GATK…MVLR), 163–202 (CHNTDVYTVLFSPFDSGLLVSGGAGHIKFWTMANTFTGLK), 213–251 (LEISNVSGFVVLSDGKVISGSESGLIILWEGDLIRCCFA), 276–315 (CHEGAINVVELMEGGRVLMTAGDDGYFRFWRVSELEVAEG), and 388–427 (FNGGSITSAALSPIDHTVVTGGEDGTIRLVDYVTPRELYK). The segment covering 1155-1165 (RQEEKLREQTA) has biased composition (basic and acidic residues). A disordered region spans residues 1155–1224 (RQEEKLREQT…FGTAAARTRS (70 aa)). Positions 1181–1190 (PATNTDTSGA) are enriched in polar residues. Residues 1194-1205 (ATRRSEGEDSRK) are compositionally biased toward basic and acidic residues. Residues 1348–1389 (YDEARNSRDRCLREMEELQRLVQDQTASIEKLQEANKVFRRE) adopt a coiled-coil conformation. The segment at 1420-1444 (HSDMSGNDDDITSDDDDDDDMGEDE) is disordered. Residues 1425-1444 (GNDDDITSDDDDDDDMGEDE) are compositionally biased toward acidic residues.

It belongs to the CFAP44 family.

Its subcellular location is the cell projection. It localises to the cilium. The protein localises to the flagellum. It is found in the cytoplasm. The protein resides in the cytoskeleton. Its subcellular location is the flagellum axoneme. In terms of biological role, flagellar protein involved in flagellum axoneme organization and function. The polypeptide is Cilia- and flagella-associated protein 44 (Trypanosoma brucei brucei (strain 927/4 GUTat10.1)).